The primary structure comprises 219 residues: Auxin-responsive protein IAA24 (219 aa).

Positions 24-28 (LCLRL) match the EAR-like (transcriptional repression) motif. 2 disordered regions span residues 24–88 (LCLR…AKAQ) and 109–128 (AAAA…QQGG). The span at 60 to 71 (STDSMASGTGTS) shows a compositional bias: polar residues. The region spanning 129-215 (GLYVKVSMDG…SCKKLRIMKG (87 aa)) is the PB1 domain.

It belongs to the Aux/IAA family. Homodimers and heterodimers. Highly expressed in flowers. Expressed in seedlings.

The protein localises to the nucleus. Its function is as follows. Aux/IAA proteins are short-lived transcriptional factors that function as repressors of early auxin response genes at low auxin concentrations. The chain is Auxin-responsive protein IAA24 (IAA24) from Oryza sativa subsp. japonica (Rice).